We begin with the raw amino-acid sequence, 672 residues long: Serine/threonine-protein kinase ppk16 (672 aa).

The region spanning 31–279 (YRIESVVGEG…IDQIISHPYF (249 aa)) is the Protein kinase domain. ATP-binding positions include 37–45 (VGEGSFGKV) and Lys-60. The Proton acceptor role is filled by Asp-148. Residue Ser-231 is modified to Phosphoserine. Polar residues predominate over residues 375-384 (VSVMSNNQDS). Disordered stretches follow at residues 375–396 (VSVM…DSSN), 416–436 (DTLS…ENYL), 464–572 (NSFG…YSNV), and 632–672 (SGRK…TDLL). The span at 472–487 (NLPQTTHVDTGEQNTP) shows a compositional bias: polar residues. The segment covering 508–523 (SNSQNSPSKSSNLSIN) has biased composition (low complexity). Over residues 531–541 (LQNTVISPQPT) the composition is skewed to polar residues. Low complexity-rich tracts occupy residues 549–572 (RSLS…YSNV) and 639–649 (SSSSLMFNQSS).

This sequence belongs to the protein kinase superfamily. Ser/Thr protein kinase family.

It localises to the cytoplasm. The catalysed reaction is L-seryl-[protein] + ATP = O-phospho-L-seryl-[protein] + ADP + H(+). It carries out the reaction L-threonyl-[protein] + ATP = O-phospho-L-threonyl-[protein] + ADP + H(+). Functionally, has a role in meiosis. The protein is Serine/threonine-protein kinase ppk16 (ppk16) of Schizosaccharomyces pombe (strain 972 / ATCC 24843) (Fission yeast).